Here is a 38-residue protein sequence, read N- to C-terminus: Turripeptide GpIAa (38 aa).

The protein belongs to the turripeptide family. Expressed by the venom duct.

The protein resides in the secreted. This Cryptogemma periscelida (Atlantic gem-turris) protein is Turripeptide GpIAa.